The primary structure comprises 417 residues: Type II methyltransferase M.KpnI (417 aa).

The protein belongs to the N(4)/N(6)-methyltransferase family.

It carries out the reaction a 2'-deoxyadenosine in DNA + S-adenosyl-L-methionine = an N(6)-methyl-2'-deoxyadenosine in DNA + S-adenosyl-L-homocysteine + H(+). Functionally, a beta subtype methylase, recognizes the double-stranded sequence 5'-GGTACC-3', methylates A-4 on both strands, and protects the DNA from cleavage by the KpnI endonuclease. The protein is Type II methyltransferase M.KpnI of Klebsiella pneumoniae.